The chain runs to 440 residues: Xylose isomerase (440 aa).

Catalysis depends on residues histidine 101 and aspartate 104. Mg(2+) is bound by residues glutamate 232, glutamate 268, histidine 271, aspartate 296, aspartate 307, aspartate 309, and aspartate 339.

Belongs to the xylose isomerase family. In terms of assembly, homotetramer. It depends on Mg(2+) as a cofactor.

The protein resides in the cytoplasm. It catalyses the reaction alpha-D-xylose = alpha-D-xylulofuranose. The sequence is that of Xylose isomerase from Escherichia coli O157:H7.